The chain runs to 83 residues: Exodeoxyribonuclease 7 small subunit (83 aa).

Belongs to the XseB family. As to quaternary structure, heterooligomer composed of large and small subunits.

The protein resides in the cytoplasm. The catalysed reaction is Exonucleolytic cleavage in either 5'- to 3'- or 3'- to 5'-direction to yield nucleoside 5'-phosphates.. In terms of biological role, bidirectionally degrades single-stranded DNA into large acid-insoluble oligonucleotides, which are then degraded further into small acid-soluble oligonucleotides. The chain is Exodeoxyribonuclease 7 small subunit from Nitrobacter winogradskyi (strain ATCC 25391 / DSM 10237 / CIP 104748 / NCIMB 11846 / Nb-255).